We begin with the raw amino-acid sequence, 394 residues long: Elongation factor Tu 1 (394 aa).

Positions 10–204 (KPHVNVGTIG…ALDTYIPEPE (195 aa)) constitute a tr-type G domain. A G1 region spans residues 19 to 26 (GHVDHGKT). 19-26 (GHVDHGKT) is a binding site for GTP. Thr-26 lines the Mg(2+) pocket. The interval 60-64 (GITIS) is G2. Positions 81 to 84 (DCPG) are G3. Residues 81 to 85 (DCPGH) and 136 to 139 (NKCD) contribute to the GTP site. Positions 136 to 139 (NKCD) are G4. The G5 stretch occupies residues 174-176 (SAL).

It belongs to the TRAFAC class translation factor GTPase superfamily. Classic translation factor GTPase family. EF-Tu/EF-1A subfamily. In terms of assembly, monomer.

The protein localises to the cytoplasm. It carries out the reaction GTP + H2O = GDP + phosphate + H(+). GTP hydrolase that promotes the GTP-dependent binding of aminoacyl-tRNA to the A-site of ribosomes during protein biosynthesis. The chain is Elongation factor Tu 1 from Vibrio vulnificus (strain CMCP6).